A 125-amino-acid chain; its full sequence is Histone H2B (125 aa).

Residues 1–32 are disordered; sequence MAPKVRAAKKGEKRVGKAKSGTAETAKRRRGK. Serine 112 is a glycosylation site (O-linked (GlcNAc) serine). A Glycyl lysine isopeptide (Lys-Gly) (interchain with G-Cter in ubiquitin) cross-link involves residue lysine 120.

Belongs to the histone H2B family. In terms of assembly, the nucleosome is a histone octamer containing two molecules each of H2A, H2B, H3 and H4 assembled in one H3-H4 heterotetramer and two H2A-H2B heterodimers. The octamer wraps approximately 147 bp of DNA. In terms of processing, monoubiquitination of Lys-120 gives a specific tag for epigenetic transcriptional activation and is also prerequisite for histone H3 'Lys-4' and 'Lys-79' methylation. GlcNAcylation at Ser-112 promotes monoubiquitination of Lys-120. It fluctuates in response to extracellular glucose, and associates with transcribed genes.

Its subcellular location is the nucleus. It is found in the chromosome. In terms of biological role, core component of nucleosome. Nucleosomes wrap and compact DNA into chromatin, limiting DNA accessibility to the cellular machineries which require DNA as a template. Histones thereby play a central role in transcription regulation, DNA repair, DNA replication and chromosomal stability. DNA accessibility is regulated via a complex set of post-translational modifications of histones, also called histone code, and nucleosome remodeling. This is Histone H2B from Acropora formosa (Staghorn coral).